Here is a 387-residue protein sequence, read N- to C-terminus: MEFEFFFQIALILLSTKLAGDLSVRLGQPSVLGKLIVGIVIGPAVLGWIENSELLTQLSNVGVILLMFMAGLETDLEELNANRNSSLAVALGGIILPFVGGYVSGLVMGMEQGNAVFLGLLLCATSVSISVQTLRDLGKMKTRESTTMLGAAVFDDILVVILLAFAMSFLGTDDVNLTMVILKKVVFFASIILIGWKGVPAIMRWLSPLRVSESIVSAALIICFSFAYFGELLGIAGIIGAFAAGIAISQTNYKHEVEKKVEPIAYAMFVPVFFVSIGMNITFDGIGNQIWFILALTVIAVLTKLIGCGFGARMTGFDAKSSAIIGAGMVSRGEVALIIAGTGLSSGLLAQDYFTAIVIVVILTTMITPPMLKYTFGAKDKAMKASK.

A run of 11 helical transmembrane segments spans residues 29–49 (PSVLGKLIVGIVIGPAVLGWI), 54–74 (LLTQLSNVGVILLMFMAGLET), 87–107 (LAVALGGIILPFVGGYVSGLV), 114–134 (NAVFLGLLLCATSVSISVQTL), 149–169 (LGAAVFDDILVVILLAFAMSF), 175–195 (VNLTMVILKKVVFFASIILIG), 219–239 (ALIICFSFAYFGELLGIAGII), 263–283 (PIAYAMFVPVFFVSIGMNITF), 290–310 (IWFILALTVIAVLTKLIGCGF), 324–344 (IIGAGMVSRGEVALIIAGTGL), and 347–367 (GLLAQDYFTAIVIVVILTTMI).

Belongs to the monovalent cation:proton antiporter 2 (CPA2) transporter (TC 2.A.37) family.

It localises to the membrane. Functionally, na(+)/H(+) antiporter that extrudes sodium in exchange for external protons. Can also use potassium as a coupling ion, without completely replacing H(+). This Na(+)/H(+)-K(+) antiport is much more rapid than Na(+)/H(+) antiport. Can also extrude lithium. Important for the inosine-dependent germination of spores. In Bacillus cereus, this protein is Na(+)/H(+)-K(+) antiporter GerN (gerN).